Reading from the N-terminus, the 95-residue chain is Aspartyl/glutamyl-tRNA(Asn/Gln) amidotransferase subunit C (95 aa).

The protein belongs to the GatC family. Heterotrimer of A, B and C subunits.

The catalysed reaction is L-glutamyl-tRNA(Gln) + L-glutamine + ATP + H2O = L-glutaminyl-tRNA(Gln) + L-glutamate + ADP + phosphate + H(+). It catalyses the reaction L-aspartyl-tRNA(Asn) + L-glutamine + ATP + H2O = L-asparaginyl-tRNA(Asn) + L-glutamate + ADP + phosphate + 2 H(+). In terms of biological role, allows the formation of correctly charged Asn-tRNA(Asn) or Gln-tRNA(Gln) through the transamidation of misacylated Asp-tRNA(Asn) or Glu-tRNA(Gln) in organisms which lack either or both of asparaginyl-tRNA or glutaminyl-tRNA synthetases. The reaction takes place in the presence of glutamine and ATP through an activated phospho-Asp-tRNA(Asn) or phospho-Glu-tRNA(Gln). The protein is Aspartyl/glutamyl-tRNA(Asn/Gln) amidotransferase subunit C of Pseudomonas paraeruginosa (strain DSM 24068 / PA7) (Pseudomonas aeruginosa (strain PA7)).